Consider the following 427-residue polypeptide: UPF0597 protein CPR_0790 (427 aa).

This sequence belongs to the UPF0597 family.

The sequence is that of UPF0597 protein CPR_0790 from Clostridium perfringens (strain SM101 / Type A).